Here is a 132-residue protein sequence, read N- to C-terminus: Small ribosomal subunit protein uS11 (132 aa).

A disordered region spans residues 1 to 24 (MAAQKQAARKPRRRDRKSVPVGQA). Basic residues predominate over residues 7–16 (AARKPRRRDR).

This sequence belongs to the universal ribosomal protein uS11 family. As to quaternary structure, part of the 30S ribosomal subunit. Interacts with proteins S7 and S18. Binds to IF-3.

Functionally, located on the platform of the 30S subunit, it bridges several disparate RNA helices of the 16S rRNA. Forms part of the Shine-Dalgarno cleft in the 70S ribosome. The sequence is that of Small ribosomal subunit protein uS11 from Bifidobacterium adolescentis (strain ATCC 15703 / DSM 20083 / NCTC 11814 / E194a).